The following is a 103-amino-acid chain: UPF0235 protein RL4503 (103 aa).

It belongs to the UPF0235 family.

The polypeptide is UPF0235 protein RL4503 (Rhizobium johnstonii (strain DSM 114642 / LMG 32736 / 3841) (Rhizobium leguminosarum bv. viciae)).